The chain runs to 367 residues: Succinyl-diaminopimelate desuccinylase (367 aa).

Residue H67 coordinates Zn(2+). D69 is an active-site residue. A Zn(2+)-binding site is contributed by D98. E128 serves as the catalytic Proton acceptor. Residues E129, E157, and H342 each contribute to the Zn(2+) site.

Belongs to the peptidase M20A family. DapE subfamily. In terms of assembly, homodimer. Zn(2+) serves as cofactor. Requires Co(2+) as cofactor.

The catalysed reaction is N-succinyl-(2S,6S)-2,6-diaminopimelate + H2O = (2S,6S)-2,6-diaminopimelate + succinate. It functions in the pathway amino-acid biosynthesis; L-lysine biosynthesis via DAP pathway; LL-2,6-diaminopimelate from (S)-tetrahydrodipicolinate (succinylase route): step 3/3. Catalyzes the hydrolysis of N-succinyl-L,L-diaminopimelic acid (SDAP), forming succinate and LL-2,6-diaminopimelate (DAP), an intermediate involved in the bacterial biosynthesis of lysine and meso-diaminopimelic acid, an essential component of bacterial cell walls. This Campylobacter hominis (strain ATCC BAA-381 / DSM 21671 / CCUG 45161 / LMG 19568 / NCTC 13146 / CH001A) protein is Succinyl-diaminopimelate desuccinylase.